The sequence spans 142 residues: FAD synthase (142 aa).

ATP contacts are provided by residues 9 to 10 (VF), 14 to 17 (HLGH), Asp-93, and Tyr-120.

This sequence belongs to the archaeal FAD synthase family. As to quaternary structure, homodimer. The cofactor is a divalent metal cation.

The catalysed reaction is FMN + ATP + H(+) = FAD + diphosphate. The protein operates within cofactor biosynthesis; FAD biosynthesis; FAD from FMN: step 1/1. Its function is as follows. Catalyzes the transfer of the AMP portion of ATP to flavin mononucleotide (FMN) to produce flavin adenine dinucleotide (FAD) coenzyme. In Thermoplasma volcanium (strain ATCC 51530 / DSM 4299 / JCM 9571 / NBRC 15438 / GSS1), this protein is FAD synthase (ribL).